Reading from the N-terminus, the 348-residue chain is MSLLESISKNIYSLDNSSIEKTKQRLDRLIHPTGSLGKIEDICMQLAGIFGNENFDTSKKVIIAFAGDHGVYEEGVAPDPQNITKLQFPNFSKGLCGVGVISKFVGADVVAVDVGINCDEKLDGVLDYKIRKGTSNMAKGPAMSKQEAIRCLEIGIEIAEQCIEKDYKVIGIGEMGIANTTPSTAIISVISGCDPLEVTGIGAGLKKERLKHKAEVIRKAIEINNPNPTDGVDILSKVGGFEIGSMAGVILGCSANRIPVVIDGFISYAAALIAYKINPKTREYMIASHLSAESGTKRALDILKLDPLLNMDMRLGEGSGAALAFDIIEASNYTYKNMATFDEIDMGR.

Glu-317 (proton acceptor) is an active-site residue.

Belongs to the CobT family.

The catalysed reaction is 5,6-dimethylbenzimidazole + nicotinate beta-D-ribonucleotide = alpha-ribazole 5'-phosphate + nicotinate + H(+). Its pathway is nucleoside biosynthesis; alpha-ribazole biosynthesis; alpha-ribazole from 5,6-dimethylbenzimidazole: step 1/2. In terms of biological role, catalyzes the synthesis of alpha-ribazole-5'-phosphate from nicotinate mononucleotide (NAMN) and 5,6-dimethylbenzimidazole (DMB). The sequence is that of Nicotinate-nucleotide--dimethylbenzimidazole phosphoribosyltransferase from Clostridioides difficile (strain 630) (Peptoclostridium difficile).